The following is a 103-amino-acid chain: Co-chaperonin GroES (103 aa).

This sequence belongs to the GroES chaperonin family. As to quaternary structure, heptamer of 7 subunits arranged in a ring. Interacts with the chaperonin GroEL.

It is found in the cytoplasm. Its function is as follows. Together with the chaperonin GroEL, plays an essential role in assisting protein folding. The GroEL-GroES system forms a nano-cage that allows encapsulation of the non-native substrate proteins and provides a physical environment optimized to promote and accelerate protein folding. GroES binds to the apical surface of the GroEL ring, thereby capping the opening of the GroEL channel. The chain is Co-chaperonin GroES from Nostoc sp. (strain PCC 7120 / SAG 25.82 / UTEX 2576).